The primary structure comprises 347 residues: Large ribosomal subunit protein uL3 (347 aa).

Residues 325-347 (RPPKKKPPVERPQITYISRESKQ) are disordered.

Belongs to the universal ribosomal protein uL3 family. Part of the 50S ribosomal subunit. Forms a cluster with proteins L14 and L24e.

One of the primary rRNA binding proteins, it binds directly near the 3'-end of the 23S rRNA, where it nucleates assembly of the 50S subunit. This Thermococcus onnurineus (strain NA1) protein is Large ribosomal subunit protein uL3.